Consider the following 464-residue polypeptide: Protein FAM90A13 (464 aa).

Disordered regions lie at residues 1–42 (MMAR…DPRL), 69–389 (VPAT…HDGA), and 411–437 (APSFHSPEKPGAFLAQSPHVSEKSEAP). Composition is skewed to basic and acidic residues over residues 74 to 89 (GKKEGKENLKPWKPRG) and 97 to 114 (NKDKGEKEERPRQQDPQR). A compositionally biased stretch (low complexity) spans 180-197 (LASLSPLRKASLSSSSSL).

Belongs to the FAM90 family.

This Homo sapiens (Human) protein is Protein FAM90A13.